The primary structure comprises 329 residues: Type 2 lactosamine alpha-2,3-sialyltransferase (329 aa).

Over 1–4 (MKGY) the chain is Cytoplasmic. The chain crosses the membrane as a helical; Signal-anchor for type II membrane protein span at residues 5 to 25 (LVAIFLSSIFLYYVLYCILWG). Over 26-329 (TNGYWFPAEE…IKKKMVINLT (304 aa)) the chain is Lumenal. 4 N-linked (GlcNAc...) asparagine glycosylation sites follow: Asn-129, Asn-181, Asn-295, and Asn-308.

It belongs to the glycosyltransferase 29 family.

The protein resides in the golgi apparatus membrane. It carries out the reaction a neolactoside nLc4Cer(d18:1(4E)) + CMP-N-acetyl-beta-neuraminate = a neolactoside IV(3)-alpha-NeuAc-nLc4Cer(d18:1(4E)) + CMP + H(+). The catalysed reaction is a beta-D-galactosyl-(1-&gt;4)-N-acetyl-beta-D-glucosaminyl derivative + CMP-N-acetyl-beta-neuraminate = an N-acetyl-alpha-neuraminyl-(2-&gt;3)-beta-D-galactosyl-(1-&gt;4)-N-acetyl-beta-D-glucosaminyl derivative + CMP + H(+). It catalyses the reaction a neolactoside nLc6Cer(d18:1(4E)) + CMP-N-acetyl-beta-neuraminate = a neolactoside VI(3)-alpha-NeuNAc-nLc6Cer(d18:1(4E)) + CMP + H(+). In terms of biological role, transfers the sialyl residue from CMP-N-acetyl-beta-neuraminate to the terminal galactose residue on sugar chains of glycoproteins and glycolipids. It's alpha-2,3-sialyltransferase activity is specific toward type II glycan chains (Galbeta1-4GlcNAc) on glycoproteins and glycolipids such as neolactosides nLc4Cer and nLc6Cer, whose sialyl-products serve as precursors for the Lewis X antigen. Critically involved in the synthesis of functional selectin ligands needed for neutrophil recruitment during inflammation and lymphocyte homing to the lymph nodes. In Mus musculus (Mouse), this protein is Type 2 lactosamine alpha-2,3-sialyltransferase (St3gal6).